The sequence spans 135 residues: Holo-[acyl-carrier-protein] synthase (135 aa).

Residues D8 and E57 each contribute to the Mg(2+) site.

The protein belongs to the P-Pant transferase superfamily. AcpS family. Mg(2+) serves as cofactor.

It is found in the cytoplasm. The catalysed reaction is apo-[ACP] + CoA = holo-[ACP] + adenosine 3',5'-bisphosphate + H(+). In terms of biological role, transfers the 4'-phosphopantetheine moiety from coenzyme A to a Ser of acyl-carrier-protein. The sequence is that of Holo-[acyl-carrier-protein] synthase from Xanthobacter autotrophicus (strain ATCC BAA-1158 / Py2).